Consider the following 472-residue polypeptide: Argininosuccinate lyase (472 aa).

This sequence belongs to the lyase 1 family. Argininosuccinate lyase subfamily.

It is found in the cytoplasm. The enzyme catalyses 2-(N(omega)-L-arginino)succinate = fumarate + L-arginine. Its pathway is amino-acid biosynthesis; L-arginine biosynthesis; L-arginine from L-ornithine and carbamoyl phosphate: step 3/3. The sequence is that of Argininosuccinate lyase from Cupriavidus necator (strain ATCC 17699 / DSM 428 / KCTC 22496 / NCIMB 10442 / H16 / Stanier 337) (Ralstonia eutropha).